A 96-amino-acid polypeptide reads, in one-letter code: Exodeoxyribonuclease 7 small subunit (96 aa).

The segment covering 61–79 (ALTKDESQKTNKTGFRTES) has biased composition (basic and acidic residues). Residues 61–96 (ALTKDESQKTNKTGFRTESKSTSQTSSDSVLEEDLF) are disordered. Residues 80-89 (KSTSQTSSDS) show a composition bias toward low complexity.

This sequence belongs to the XseB family. As to quaternary structure, heterooligomer composed of large and small subunits.

Its subcellular location is the cytoplasm. The enzyme catalyses Exonucleolytic cleavage in either 5'- to 3'- or 3'- to 5'-direction to yield nucleoside 5'-phosphates.. Functionally, bidirectionally degrades single-stranded DNA into large acid-insoluble oligonucleotides, which are then degraded further into small acid-soluble oligonucleotides. The polypeptide is Exodeoxyribonuclease 7 small subunit (Leptospira borgpetersenii serovar Hardjo-bovis (strain JB197)).